Consider the following 96-residue polypeptide: Pyrimidine/purine nucleoside phosphorylase (96 aa).

The protein belongs to the nucleoside phosphorylase PpnP family.

The enzyme catalyses a purine D-ribonucleoside + phosphate = a purine nucleobase + alpha-D-ribose 1-phosphate. It catalyses the reaction adenosine + phosphate = alpha-D-ribose 1-phosphate + adenine. The catalysed reaction is cytidine + phosphate = cytosine + alpha-D-ribose 1-phosphate. It carries out the reaction guanosine + phosphate = alpha-D-ribose 1-phosphate + guanine. The enzyme catalyses inosine + phosphate = alpha-D-ribose 1-phosphate + hypoxanthine. It catalyses the reaction thymidine + phosphate = 2-deoxy-alpha-D-ribose 1-phosphate + thymine. The catalysed reaction is uridine + phosphate = alpha-D-ribose 1-phosphate + uracil. It carries out the reaction xanthosine + phosphate = alpha-D-ribose 1-phosphate + xanthine. Catalyzes the phosphorolysis of diverse nucleosides, yielding D-ribose 1-phosphate and the respective free bases. Can use uridine, adenosine, guanosine, cytidine, thymidine, inosine and xanthosine as substrates. Also catalyzes the reverse reactions. This Erwinia tasmaniensis (strain DSM 17950 / CFBP 7177 / CIP 109463 / NCPPB 4357 / Et1/99) protein is Pyrimidine/purine nucleoside phosphorylase.